A 305-amino-acid chain; its full sequence is MIKQRTLKRIVQATGVGLHTGKKVTLTLRPAPANTGVIYRRTDLNPPVDFPADAKSVRDTMLCTCLVNEHDVRISTVEHLNAALAGLGIDNIVIEVNAPEIPIMDGSAAPFVYLLLDAGIDELNCAKKFVRIKETVRVEDGDKWAEFRPYNGFTLDFTIDFNHPAIDSSSQRYAMNFSADAFMRQISRARTFGFMRDIEYLQSRGLCLGGSFDCAIVVDDYRVLNEDGLRFEDEFVRHKMLDAIGDLFMCGHNIIGAFTAYKSGHALNNKLLQAVLAKQEAWEFVTFQDDAELPLAFKAPSTVLA.

Residues histidine 79, histidine 238, and aspartate 242 each coordinate Zn(2+). The active-site Proton donor is the histidine 265.

Belongs to the LpxC family. It depends on Zn(2+) as a cofactor.

It carries out the reaction a UDP-3-O-[(3R)-3-hydroxyacyl]-N-acetyl-alpha-D-glucosamine + H2O = a UDP-3-O-[(3R)-3-hydroxyacyl]-alpha-D-glucosamine + acetate. It participates in glycolipid biosynthesis; lipid IV(A) biosynthesis; lipid IV(A) from (3R)-3-hydroxytetradecanoyl-[acyl-carrier-protein] and UDP-N-acetyl-alpha-D-glucosamine: step 2/6. In terms of biological role, catalyzes the hydrolysis of UDP-3-O-myristoyl-N-acetylglucosamine to form UDP-3-O-myristoylglucosamine and acetate, the committed step in lipid A biosynthesis. The polypeptide is UDP-3-O-acyl-N-acetylglucosamine deacetylase (Salmonella agona (strain SL483)).